The sequence spans 580 residues: Serine/threonine-protein kinase srk1 (580 aa).

The segment covering 51–61 has biased composition (polar residues); that stretch reads VADSTQNPTSK. Positions 51-91 are disordered; sequence VADSTQNPTSKPKSRHAHFHETVHENPSEYSRSKCKQPTNE. The 298-residue stretch at 124–421 folds into the Protein kinase domain; sequence YTLLQKMGDG…IHQFLAHPWI (298 aa). ATP-binding positions include 130–138 and Lys153; that span reads MGDGAFSNV. Catalysis depends on Asp257, which acts as the Proton acceptor. The interval 530–580 is disordered; sequence NLSGENDPSLASRQPAQSQQQSSQRSRNKFKGFQLNLSKATLYNRRHRQKV. Low complexity predominate over residues 537–554; that stretch reads PSLASRQPAQSQQQSSQR.

The protein belongs to the protein kinase superfamily. CAMK Ser/Thr protein kinase family. CaMK subfamily. Mg(2+) is required as a cofactor. In terms of processing, phosphorylated by sty1.

The protein resides in the cytoplasm. Its subcellular location is the nucleus. It is found in the nucleolus. The protein localises to the spore core. It catalyses the reaction L-seryl-[protein] + ATP = O-phospho-L-seryl-[protein] + ADP + H(+). It carries out the reaction L-threonyl-[protein] + ATP = O-phospho-L-threonyl-[protein] + ADP + H(+). Delays the mitotic G2/M transition by promoting nuclear exclusion of cdc25. During osmotic stress, inhibits the G2/M transition in a sty1 stress-activated MAPK pathway-dependent manner. The chain is Serine/threonine-protein kinase srk1 from Schizosaccharomyces pombe (strain 972 / ATCC 24843) (Fission yeast).